The chain runs to 73 residues: Disintegrin trigramin-gamma (73 aa).

Positions 1–73 (EAGEDCDCGS…AGCPRNPLHA (73 aa)) constitute a Disintegrin domain. Disulfide bonds link cysteine 6/cysteine 21, cysteine 8/cysteine 16, cysteine 15/cysteine 38, cysteine 29/cysteine 35, cysteine 34/cysteine 59, and cysteine 47/cysteine 66. The short motif at 51–53 (RGD) is the Cell attachment site element.

Belongs to the venom metalloproteinase (M12B) family. P-II subfamily. P-IIa sub-subfamily. Monomer (disintegrin). Expressed by the venom gland.

The protein resides in the secreted. Inhibits fibrinogen interaction with platelets. Acts by binding to alpha-IIb/beta-3 (ITGA2B/ITGB3) on the platelet surface and inhibits aggregation induced by ADP, thrombin, platelet-activating factor and collagen. This is Disintegrin trigramin-gamma from Craspedocephalus gramineus (Bamboo pit viper).